The sequence spans 396 residues: NADH-quinone oxidoreductase subunit D (396 aa).

The protein belongs to the complex I 49 kDa subunit family. NDH-1 is composed of 14 different subunits. Subunits NuoB, C, D, E, F, and G constitute the peripheral sector of the complex.

The protein resides in the cell inner membrane. It catalyses the reaction a quinone + NADH + 5 H(+)(in) = a quinol + NAD(+) + 4 H(+)(out). Its function is as follows. NDH-1 shuttles electrons from NADH, via FMN and iron-sulfur (Fe-S) centers, to quinones in the respiratory chain. The immediate electron acceptor for the enzyme in this species is believed to be ubiquinone. Couples the redox reaction to proton translocation (for every two electrons transferred, four hydrogen ions are translocated across the cytoplasmic membrane), and thus conserves the redox energy in a proton gradient. This Bartonella henselae (strain ATCC 49882 / DSM 28221 / CCUG 30454 / Houston 1) (Rochalimaea henselae) protein is NADH-quinone oxidoreductase subunit D.